The sequence spans 317 residues: GTP cyclohydrolase MptA (317 aa).

It belongs to the GTP cyclohydrolase IV family. As to quaternary structure, homodimer. Fe(2+) serves as cofactor.

It carries out the reaction GTP + H2O = 7,8-dihydroneopterin 2',3'-cyclic phosphate + formate + diphosphate + H(+). It participates in cofactor biosynthesis; 5,6,7,8-tetrahydromethanopterin biosynthesis. Converts GTP to 7,8-dihydro-D-neopterin 2',3'-cyclic phosphate, the first intermediate in the biosynthesis of coenzyme methanopterin. The polypeptide is GTP cyclohydrolase MptA (Methanococcoides burtonii (strain DSM 6242 / NBRC 107633 / OCM 468 / ACE-M)).